The following is a 237-amino-acid chain: Phosphoribosylaminoimidazole-succinocarboxamide synthase (237 aa).

Belongs to the SAICAR synthetase family.

It catalyses the reaction 5-amino-1-(5-phospho-D-ribosyl)imidazole-4-carboxylate + L-aspartate + ATP = (2S)-2-[5-amino-1-(5-phospho-beta-D-ribosyl)imidazole-4-carboxamido]succinate + ADP + phosphate + 2 H(+). Its pathway is purine metabolism; IMP biosynthesis via de novo pathway; 5-amino-1-(5-phospho-D-ribosyl)imidazole-4-carboxamide from 5-amino-1-(5-phospho-D-ribosyl)imidazole-4-carboxylate: step 1/2. This Deinococcus deserti (strain DSM 17065 / CIP 109153 / LMG 22923 / VCD115) protein is Phosphoribosylaminoimidazole-succinocarboxamide synthase.